The chain runs to 329 residues: o-succinylbenzoate synthase (329 aa).

Lys-140 acts as the Proton donor in catalysis. Asp-168, Glu-197, and Asp-220 together coordinate Mg(2+). The Proton acceptor role is filled by Lys-242.

This sequence belongs to the mandelate racemase/muconate lactonizing enzyme family. MenC type 1 subfamily. Requires a divalent metal cation as cofactor.

The enzyme catalyses (1R,6R)-6-hydroxy-2-succinyl-cyclohexa-2,4-diene-1-carboxylate = 2-succinylbenzoate + H2O. Its pathway is quinol/quinone metabolism; 1,4-dihydroxy-2-naphthoate biosynthesis; 1,4-dihydroxy-2-naphthoate from chorismate: step 4/7. It functions in the pathway quinol/quinone metabolism; menaquinone biosynthesis. In terms of biological role, converts 2-succinyl-6-hydroxy-2,4-cyclohexadiene-1-carboxylate (SHCHC) to 2-succinylbenzoate (OSB). The sequence is that of o-succinylbenzoate synthase from Haemophilus influenzae (strain ATCC 51907 / DSM 11121 / KW20 / Rd).